Consider the following 350-residue polypeptide: MANIETILKLAEEKILLVHNLKDLQEYKVEFLGKNGIVTSELKKLSSLVNGQERKEFGLKINTLKDKIHNIIKAKVQILEEEELNLKLAADKIDLTIPARRYKQGSIHPITQCMDELIQVFAQFGFTIENGPNIENDFHNFTALNFEYDHPARQMHDTFYLKGRENDKPLLLRTHTSTVQIRAMKNGKPPFRFIAPGRTYRSDSDMTHTPMFHQIEGLVIDKNINMGHLKYVIIKFIRSFFENPNIELRFRPSFFPFTEPSAEVDIRMNKNDKWLEVLGCGMVHPNVLKNVGIDRSEYQGFAFGLGVERFAMLKYNIKDLRRFFEGDIRWLKHYNFESFDIPNLAGGLTK.

Glu259 is a binding site for Mg(2+).

Belongs to the class-II aminoacyl-tRNA synthetase family. Phe-tRNA synthetase alpha subunit type 1 subfamily. As to quaternary structure, tetramer of two alpha and two beta subunits. Mg(2+) is required as a cofactor.

It is found in the cytoplasm. The enzyme catalyses tRNA(Phe) + L-phenylalanine + ATP = L-phenylalanyl-tRNA(Phe) + AMP + diphosphate + H(+). The protein is Phenylalanine--tRNA ligase alpha subunit of Rickettsia typhi (strain ATCC VR-144 / Wilmington).